The chain runs to 188 residues: FUN14 domain-containing protein 1B (188 aa).

The chain crosses the membrane as a helical span at residues valine 21–phenylalanine 41. Residues tyrosine 52–leucine 55 carry the YXXL motif. Transmembrane regions (helical) follow at residues tyrosine 82–phenylalanine 102, alanine 109–isoleucine 129, and phenylalanine 167–alanine 187.

Belongs to the FUN14 family.

The protein resides in the mitochondrion outer membrane. Functionally, acts as an activator of hypoxia-induced mitophagy, an important mechanism for mitochondrial quality control. This Xenopus laevis (African clawed frog) protein is FUN14 domain-containing protein 1B (fundc1-b).